Here is a 255-residue protein sequence, read N- to C-terminus: 2-dehydro-3,6-dideoxy-6-sulfogluconate aldolase (255 aa).

His38 serves as the catalytic Proton acceptor. A divalent metal cation is bound by residues Glu141 and Asp167.

Belongs to the HpcH/HpaI aldolase family. In terms of assembly, homohexamer; trimer of dimers. Requires a divalent metal cation as cofactor.

It carries out the reaction 2-dehydro-3,6-dideoxy-6-sulfo-D-gluconate = (2S)-3-sulfolactaldehyde + pyruvate. Catalyzes the retro-aldol cleavage of 2-dehydro-3,6-dideoxy-6-sulfo-D-gluconate to (2S)-3-sulfolactaldehyde and pyruvate. Is involved in a degradation pathway of sulfoquinovose (SQ) that allows P.putida SQ1 to use SQ as the sole carbon and energy source for growth. This is 2-dehydro-3,6-dideoxy-6-sulfogluconate aldolase from Pseudomonas putida (Arthrobacter siderocapsulatus).